The following is a 240-amino-acid chain: Ubiquinone biosynthesis O-methyltransferase (240 aa).

S-adenosyl-L-methionine-binding residues include Arg-36, Gly-66, Asp-87, and Met-129.

It belongs to the methyltransferase superfamily. UbiG/COQ3 family.

The catalysed reaction is a 3-demethylubiquinol + S-adenosyl-L-methionine = a ubiquinol + S-adenosyl-L-homocysteine + H(+). It carries out the reaction a 3-(all-trans-polyprenyl)benzene-1,2-diol + S-adenosyl-L-methionine = a 2-methoxy-6-(all-trans-polyprenyl)phenol + S-adenosyl-L-homocysteine + H(+). It participates in cofactor biosynthesis; ubiquinone biosynthesis. Its function is as follows. O-methyltransferase that catalyzes the 2 O-methylation steps in the ubiquinone biosynthetic pathway. The sequence is that of Ubiquinone biosynthesis O-methyltransferase from Pelagibacter ubique (strain HTCC1062).